A 287-amino-acid chain; its full sequence is Phosphatidylserine decarboxylase proenzyme (287 aa).

Residues D89, H146, and S252 each act as charge relay system; for autoendoproteolytic cleavage activity in the active site. The Schiff-base intermediate with substrate; via pyruvic acid; for decarboxylase activity role is filled by S252. S252 carries the post-translational modification Pyruvic acid (Ser); by autocatalysis.

The protein belongs to the phosphatidylserine decarboxylase family. PSD-B subfamily. Prokaryotic type I sub-subfamily. Heterodimer of a large membrane-associated beta subunit and a small pyruvoyl-containing alpha subunit. The cofactor is pyruvate. Is synthesized initially as an inactive proenzyme. Formation of the active enzyme involves a self-maturation process in which the active site pyruvoyl group is generated from an internal serine residue via an autocatalytic post-translational modification. Two non-identical subunits are generated from the proenzyme in this reaction, and the pyruvate is formed at the N-terminus of the alpha chain, which is derived from the carboxyl end of the proenzyme. The autoendoproteolytic cleavage occurs by a canonical serine protease mechanism, in which the side chain hydroxyl group of the serine supplies its oxygen atom to form the C-terminus of the beta chain, while the remainder of the serine residue undergoes an oxidative deamination to produce ammonia and the pyruvoyl prosthetic group on the alpha chain. During this reaction, the Ser that is part of the protease active site of the proenzyme becomes the pyruvoyl prosthetic group, which constitutes an essential element of the active site of the mature decarboxylase.

Its subcellular location is the cell membrane. The catalysed reaction is a 1,2-diacyl-sn-glycero-3-phospho-L-serine + H(+) = a 1,2-diacyl-sn-glycero-3-phosphoethanolamine + CO2. It functions in the pathway phospholipid metabolism; phosphatidylethanolamine biosynthesis; phosphatidylethanolamine from CDP-diacylglycerol: step 2/2. Its function is as follows. Catalyzes the formation of phosphatidylethanolamine (PtdEtn) from phosphatidylserine (PtdSer). The polypeptide is Phosphatidylserine decarboxylase proenzyme (Shewanella halifaxensis (strain HAW-EB4)).